The sequence spans 355 residues: Glucose-6-phosphatase 2 (355 aa).

Over 1–24 (MDFLHRSGVLIIHHLQEDYRTYYG) the chain is Lumenal. A helical membrane pass occupies residues 25–45 (FLNFMSNVGDPRNIFSIYFPL). Residues 46–56 (WFQLNQNVGTK) lie on the Cytoplasmic side of the membrane. Residues 57–77 (MIWVAVIGDWFNLIFKWILFG) traverse the membrane as a helical segment. At 78 to 115 (HRPYWWIQETEIYPNHSSPCLEQFPTTCETGPGSPSGH) the chain is on the lumenal side. Position 79 (Arg-79) interacts with substrate. Asn-92 is a glycosylation site (N-linked (GlcNAc...) asparagine). His-115 serves as the catalytic Proton donor. A helical membrane pass occupies residues 116-136 (AMGSSCVWYVMVTAALSYTIS). Residues 137-146 (RMEESSVTLH) are Cytoplasmic-facing. The chain crosses the membrane as a helical span at residues 147–167 (RLTWSFLWSVFWLIQISVCIS). Arg-168 is a topological domain (lumenal). Substrate is bound at residue Arg-168. A helical transmembrane segment spans residues 169-189 (VFIATHFPHQVILGVIGGMLV). The active-site Nucleophile is His-174. The Cytoplasmic segment spans residues 190-211 (AEAFEHTPGVHMASLSVYLKTN). A helical membrane pass occupies residues 212–232 (VFLFLFALGFYLLLRLFGIDL). Over 233–252 (LWSVPIAKKWCANPDWIHID) the chain is Lumenal. The chain crosses the membrane as a helical span at residues 253-273 (STPFAGLVRNLGVLFGLGFAI). Over 274–290 (NSEMFLRSCQGENGTKP) the chain is Cytoplasmic. A helical membrane pass occupies residues 291-307 (SFRLLCALTSLTTMQLY). Over 308 to 318 (RFIKIPTHAEP) the chain is Lumenal. The chain crosses the membrane as a helical span at residues 319 to 339 (LFYLLSFCKSASIPLMVVALI). Over 340 to 355 (PYCVHMLMRPGDKKTK) the chain is Cytoplasmic. Positions 352-355 (KKTK) match the Prevents secretion from ER motif.

It belongs to the glucose-6-phosphatase family. In terms of processing, N-glycosylated; the non-glycosylated form is more unstable and is degraded through the proteasome. In terms of tissue distribution, specifically expressed in pancreatic islet cells, in particular those of beta-cell origin. Not detected in testis, kidney, muscle, liver, lung, spleen, brain, pituitary, gastric fundus or heart.

It localises to the endoplasmic reticulum membrane. It carries out the reaction D-glucose 6-phosphate + H2O = D-glucose + phosphate. The protein operates within carbohydrate biosynthesis; gluconeogenesis. Functionally, may hydrolyze glucose-6-phosphate to glucose in the endoplasmic reticulum. May be responsible for glucose production through glycogenolysis and gluconeogenesis. The chain is Glucose-6-phosphatase 2 (G6pc2) from Mus musculus (Mouse).